We begin with the raw amino-acid sequence, 338 residues long: Holliday junction branch migration complex subunit RuvB (338 aa).

Residues 4–187 (ADRLIHAEPQ…FGIPLRLEFY (184 aa)) are large ATPase domain (RuvB-L). Residues R27, G68, K71, T72, T73, 134-136 (EDY), R177, Y187, and R224 contribute to the ATP site. Mg(2+) is bound at residue T72. Residues 188-258 (NVKDLSSIVT…VAELALDMLD (71 aa)) form a small ATPAse domain (RuvB-S) region. Positions 261–338 (SEGFDYMDRK…RHFDIIQPEK (78 aa)) are head domain (RuvB-H). DNA is bound by residues R297, R316, and R321.

This sequence belongs to the RuvB family. As to quaternary structure, homohexamer. Forms an RuvA(8)-RuvB(12)-Holliday junction (HJ) complex. HJ DNA is sandwiched between 2 RuvA tetramers; dsDNA enters through RuvA and exits via RuvB. An RuvB hexamer assembles on each DNA strand where it exits the tetramer. Each RuvB hexamer is contacted by two RuvA subunits (via domain III) on 2 adjacent RuvB subunits; this complex drives branch migration. In the full resolvosome a probable DNA-RuvA(4)-RuvB(12)-RuvC(2) complex forms which resolves the HJ.

Its subcellular location is the cytoplasm. It catalyses the reaction ATP + H2O = ADP + phosphate + H(+). Functionally, the RuvA-RuvB-RuvC complex processes Holliday junction (HJ) DNA during genetic recombination and DNA repair, while the RuvA-RuvB complex plays an important role in the rescue of blocked DNA replication forks via replication fork reversal (RFR). RuvA specifically binds to HJ cruciform DNA, conferring on it an open structure. The RuvB hexamer acts as an ATP-dependent pump, pulling dsDNA into and through the RuvAB complex. RuvB forms 2 homohexamers on either side of HJ DNA bound by 1 or 2 RuvA tetramers; 4 subunits per hexamer contact DNA at a time. Coordinated motions by a converter formed by DNA-disengaged RuvB subunits stimulates ATP hydrolysis and nucleotide exchange. Immobilization of the converter enables RuvB to convert the ATP-contained energy into a lever motion, pulling 2 nucleotides of DNA out of the RuvA tetramer per ATP hydrolyzed, thus driving DNA branch migration. The RuvB motors rotate together with the DNA substrate, which together with the progressing nucleotide cycle form the mechanistic basis for DNA recombination by continuous HJ branch migration. Branch migration allows RuvC to scan DNA until it finds its consensus sequence, where it cleaves and resolves cruciform DNA. This Shewanella woodyi (strain ATCC 51908 / MS32) protein is Holliday junction branch migration complex subunit RuvB.